The chain runs to 150 residues: MAPKKKEVTRIAKLNLIGGQAKPGPALASVGINMAEFTKSFNDKTKDQNGKVIPVIITAYKDKSFDYVIKTTPVTFLLKDIAKIKSGAKDPKKQTVATISKEQALEIARYKLIDMTAYDEEAALRMIAGSAKQMGIVIEGVSAYKEKKGN.

The protein belongs to the universal ribosomal protein uL11 family. Part of the ribosomal stalk of the 50S ribosomal subunit. Interacts with L10 and the large rRNA to form the base of the stalk. L10 forms an elongated spine to which L12 dimers bind in a sequential fashion forming a multimeric L10(L12)X complex. Post-translationally, one or more lysine residues are methylated.

Forms part of the ribosomal stalk which helps the ribosome interact with GTP-bound translation factors. The protein is Large ribosomal subunit protein uL11 of Ureaplasma parvum serovar 3 (strain ATCC 27815 / 27 / NCTC 11736).